Consider the following 351-residue polypeptide: UDP-3-O-acylglucosamine N-acyltransferase (351 aa).

His240 functions as the Proton acceptor in the catalytic mechanism.

The protein belongs to the transferase hexapeptide repeat family. LpxD subfamily. Homotrimer.

The catalysed reaction is a UDP-3-O-[(3R)-3-hydroxyacyl]-alpha-D-glucosamine + a (3R)-hydroxyacyl-[ACP] = a UDP-2-N,3-O-bis[(3R)-3-hydroxyacyl]-alpha-D-glucosamine + holo-[ACP] + H(+). It functions in the pathway bacterial outer membrane biogenesis; LPS lipid A biosynthesis. Catalyzes the N-acylation of UDP-3-O-acylglucosamine using 3-hydroxyacyl-ACP as the acyl donor. Is involved in the biosynthesis of lipid A, a phosphorylated glycolipid that anchors the lipopolysaccharide to the outer membrane of the cell. This is UDP-3-O-acylglucosamine N-acyltransferase from Pseudomonas syringae pv. tomato (strain ATCC BAA-871 / DC3000).